A 527-amino-acid polypeptide reads, in one-letter code: TnpB-like protein R854 (527 aa).

Residues 21–36 show a composition bias toward basic residues; sequence GSKTKKKVFVKKKPPA. The segment at 21–50 is disordered; sequence GSKTKKKVFVKKKPPAKKPPDKKPLKKTTK. Zn(2+) contacts are provided by cysteine 481, cysteine 484, cysteine 498, and cysteine 501.

This sequence in the central section; belongs to the transposase 2 family. In the C-terminal section; belongs to the transposase 35 family.

This chain is TnpB-like protein R854, found in Acanthamoeba polyphaga mimivirus (APMV).